A 267-amino-acid polypeptide reads, in one-letter code: Tryptophan 2,3-dioxygenase (267 aa).

Substrate is bound by residues 44-48 and R114; that span reads FITIH. Position 225 (H225) interacts with heme. T239 provides a ligand contact to substrate.

It belongs to the tryptophan 2,3-dioxygenase family. Homotetramer. Heme is required as a cofactor.

It carries out the reaction L-tryptophan + O2 = N-formyl-L-kynurenine. The protein operates within amino-acid degradation; L-tryptophan degradation via kynurenine pathway; L-kynurenine from L-tryptophan: step 1/2. Its function is as follows. Heme-dependent dioxygenase that catalyzes the oxidative cleavage of the L-tryptophan (L-Trp) pyrrole ring and converts L-tryptophan to N-formyl-L-kynurenine. Catalyzes the oxidative cleavage of the indole moiety. The sequence is that of Tryptophan 2,3-dioxygenase from Nocardioides sp. (strain ATCC BAA-499 / JS614).